Consider the following 430-residue polypeptide: tRNA(Ile)-lysidine synthase (430 aa).

24–29 (SGGLDS) is an ATP binding site.

The protein belongs to the tRNA(Ile)-lysidine synthase family.

The protein localises to the cytoplasm. It carries out the reaction cytidine(34) in tRNA(Ile2) + L-lysine + ATP = lysidine(34) in tRNA(Ile2) + AMP + diphosphate + H(+). Ligates lysine onto the cytidine present at position 34 of the AUA codon-specific tRNA(Ile) that contains the anticodon CAU, in an ATP-dependent manner. Cytidine is converted to lysidine, thus changing the amino acid specificity of the tRNA from methionine to isoleucine. This is tRNA(Ile)-lysidine synthase from Haemophilus influenzae (strain PittEE).